Here is a 236-residue protein sequence, read N- to C-terminus: uncharacterized protein (236 aa).

Residues 217 to 236 (GESPDNVVRGEGGFGSTGGH) are disordered. Positions 226–236 (GEGGFGSTGGH) are enriched in gly residues.

This is an uncharacterized protein from Ostreid herpesvirus 1 (isolate France) (OsHV-1).